The following is a 164-amino-acid chain: Cyclic pyranopterin monophosphate synthase (164 aa).

Substrate is bound by residues 75–77 and 116–117; these read MCH and ME. D131 is a catalytic residue.

This sequence belongs to the MoaC family. As to quaternary structure, homohexamer; trimer of dimers.

The catalysed reaction is (8S)-3',8-cyclo-7,8-dihydroguanosine 5'-triphosphate = cyclic pyranopterin phosphate + diphosphate. The protein operates within cofactor biosynthesis; molybdopterin biosynthesis. Its function is as follows. Catalyzes the conversion of (8S)-3',8-cyclo-7,8-dihydroguanosine 5'-triphosphate to cyclic pyranopterin monophosphate (cPMP). The chain is Cyclic pyranopterin monophosphate synthase from Staphylococcus aureus (strain MSSA476).